Reading from the N-terminus, the 168-residue chain is Phosphopantetheine adenylyltransferase (168 aa).

Thr-10 is a substrate binding site. Residues 10–11 (TF) and His-18 contribute to the ATP site. Residues Lys-42, Leu-74, and Arg-88 each coordinate substrate. ATP contacts are provided by residues 89–91 (GLR), Glu-99, and 124–130 (NSFISST).

This sequence belongs to the bacterial CoaD family. In terms of assembly, homohexamer. Requires Mg(2+) as cofactor.

The protein localises to the cytoplasm. The enzyme catalyses (R)-4'-phosphopantetheine + ATP + H(+) = 3'-dephospho-CoA + diphosphate. Its pathway is cofactor biosynthesis; coenzyme A biosynthesis; CoA from (R)-pantothenate: step 4/5. Its function is as follows. Reversibly transfers an adenylyl group from ATP to 4'-phosphopantetheine, yielding dephospho-CoA (dPCoA) and pyrophosphate. This Shewanella denitrificans (strain OS217 / ATCC BAA-1090 / DSM 15013) protein is Phosphopantetheine adenylyltransferase.